The sequence spans 351 residues: DNA beta-glucosyltransferase (351 aa).

As to quaternary structure, monomer.

It catalyses the reaction Transfers a beta-D-glucosyl residue from UDP-alpha-D-glucose to a hydroxymethylcytosine residue in DNA.. It participates in genetic information processing; DNA modification. Catalyzes the transfer of glucose from uridine diphosphoglucose to 5-hydroxymethyl cytosine of T4 DNA to yield glucosyl 5-hydroxymethyl cytosine (glc-HMC). This DNA process seems to occur immediately after DNA synthesis since the DNA alpha-glucosyltransferase interacts with the clamp protein gp45. The glc-HMC modification protects the phage genome against its own nucleases and the host restriction endonuclease system. The glc-HMC modification also protects against the host CRISPR-Cas9 defense system. This is DNA beta-glucosyltransferase (bgt) from Enterobacteria phage T4 (Bacteriophage T4).